The chain runs to 332 residues: MKSNLENLNFQTSIREQVVPSRKKVKLPAWLEVAKPRLIPLLLATTLGGMALTEEWPLSSPKLICTLGGGALAAAAAGALNCLWEMDLDKRMKRTSDRALPSGKLSFNTVFLGAVSCTLAAAMLLISGVNYLAAGLTLLGLCSYVILYTIILKPRTTQNIVFGGVAGAIPPLVGASAATGHVGLSGWWLFSLVMLWTPAHFWALAILLKDDYASVGIPMLPSVKGSEFTVKAISRYGWATVFMSILGVFALPEGGILYLIMLLPFNGRLLQLINRLKSSPDDLEKAKGLFRWSILYMFGICLLLLISRTQLSVDFEHQSMQMFLSLKAYFNY.

A run of 7 helical transmembrane segments spans residues 63–83 (LICT…LNCL), 109–129 (TVFL…ISGV), 132–152 (LAAG…TIIL), 160–180 (IVFG…AATG), 188–208 (WLFS…AILL), 245–265 (ILGV…LLPF), and 286–306 (AKGL…LLLI).

The protein belongs to the UbiA prenyltransferase family. Protoheme IX farnesyltransferase subfamily.

It localises to the cell inner membrane. It catalyses the reaction heme b + (2E,6E)-farnesyl diphosphate + H2O = Fe(II)-heme o + diphosphate. It functions in the pathway porphyrin-containing compound metabolism; heme O biosynthesis; heme O from protoheme: step 1/1. Converts heme B (protoheme IX) to heme O by substitution of the vinyl group on carbon 2 of heme B porphyrin ring with a hydroxyethyl farnesyl side group. The sequence is that of Protoheme IX farnesyltransferase from Prochlorococcus marinus subsp. pastoris (strain CCMP1986 / NIES-2087 / MED4).